Consider the following 117-residue polypeptide: Large ribosomal subunit protein bL20c (117 aa).

Belongs to the bacterial ribosomal protein bL20 family.

Its subcellular location is the plastid. The protein localises to the chloroplast. In terms of biological role, binds directly to 23S ribosomal RNA and is necessary for the in vitro assembly process of the 50S ribosomal subunit. It is not involved in the protein synthesizing functions of that subunit. This is Large ribosomal subunit protein bL20c from Ceratophyllum demersum (Rigid hornwort).